The primary structure comprises 239 residues: Carboxy-S-adenosyl-L-methionine synthase (239 aa).

Residues tyrosine 35, glycine 64–serine 66, aspartate 114–leucine 115, asparagine 129, and arginine 196 each bind S-adenosyl-L-methionine.

The protein belongs to the class I-like SAM-binding methyltransferase superfamily. Cx-SAM synthase family. As to quaternary structure, homodimer.

The catalysed reaction is prephenate + S-adenosyl-L-methionine = carboxy-S-adenosyl-L-methionine + 3-phenylpyruvate + H2O. Its function is as follows. Catalyzes the conversion of S-adenosyl-L-methionine (SAM) to carboxy-S-adenosyl-L-methionine (Cx-SAM). The polypeptide is Carboxy-S-adenosyl-L-methionine synthase (Helicobacter hepaticus (strain ATCC 51449 / 3B1)).